A 358-amino-acid chain; its full sequence is 4-diphosphocytidyl-2-C-methyl-D-erythritol kinase (358 aa).

Lys24 is a catalytic residue. ATP is bound at residue 138–148; that stretch reads PVAGGMAGGSA. The active site involves Asp186.

It belongs to the GHMP kinase family. IspE subfamily.

It catalyses the reaction 4-CDP-2-C-methyl-D-erythritol + ATP = 4-CDP-2-C-methyl-D-erythritol 2-phosphate + ADP + H(+). Its pathway is isoprenoid biosynthesis; isopentenyl diphosphate biosynthesis via DXP pathway; isopentenyl diphosphate from 1-deoxy-D-xylulose 5-phosphate: step 3/6. In terms of biological role, catalyzes the phosphorylation of the position 2 hydroxy group of 4-diphosphocytidyl-2C-methyl-D-erythritol. This Corynebacterium jeikeium (strain K411) protein is 4-diphosphocytidyl-2-C-methyl-D-erythritol kinase.